The chain runs to 1024 residues: SWI/SNF-related matrix-associated actin-dependent regulator of chromatin subfamily A containing DEAD/H box 1 (1024 aa).

An N-acetylmethionine modification is found at Met1. Residues 1–83 (MNLFNLDRFR…NESKASLSCF (83 aa)) form a disordered region. A compositionally biased stretch (basic and acidic residues) spans 7–19 (DRFRFEKRSKIEE). Thr54 carries the phosphothreonine modification. A Phosphoserine modification is found at Ser57. Lys77 participates in a covalent cross-link: Glycyl lysine isopeptide (Lys-Gly) (interchain with G-Cter in SUMO2). A phosphoserine mark is found at Ser79, Ser124, Ser127, Ser132, Ser145, and Ser151. The region spanning 156–198 (LKDAKLQTLKELFPQRSDSDLLKLIDSTSTMDGAIAAALLKFG) is the CUE 1 domain. The disordered stretch occupies residues 201 to 250 (GGGPRKRKLSSSSEAYEEDEANDDQSLKKPRGDRREESNESAEASSNWEK). 2 positions are modified to phosphoserine: Ser210 and Ser213. Tyr216 bears the Phosphotyrosine mark. Residues Ser238 and Ser241 each carry the phosphoserine modification. Residues 250 to 293 (KQESIVLKLQKEFPNFDKQELREVLKEHEWMYTEALESLKVFAE) form the CUE 2 domain. Ser301 is modified (phosphoserine). Positions 331-369 (SMKPQNGFNKKRKKNVFNPKKAVEDSEYDSGSDAGSSLD) are disordered. Residues Lys333 and Lys469 each participate in a glycyl lysine isopeptide (Lys-Gly) (interchain with G-Cter in SUMO2) cross-link. A Helicase ATP-binding domain is found at 507–675 (ALVHKHGLNG…MSLLNFVMPH (169 aa)). 519–527 (ADEMGLGKT) serves as a coordination point for ATP. The DEGH box signature appears at 626 to 629 (DEGH). The short motif at 719 to 736 (RRVKEEVLKLLPPKKDQI) is the Nuclear localization signal element. A Glycyl lysine isopeptide (Lys-Gly) (interchain with G-Cter in SUMO2) cross-link involves residue Lys722. The Helicase C-terminal domain maps to 856–1008 (TLGCILSELK…MTTVDEADEG (153 aa)). 895 to 902 (YLRLDGKT) contacts ATP. A Glycyl lysine isopeptide (Lys-Gly) (interchain with G-Cter in SUMO2) cross-link involves residue Lys994. The DEAD box signature appears at 1003-1006 (DEAD).

The protein belongs to the SNF2/RAD54 helicase family. Binds to DNA preferentially in the vicinity of transcriptional start sites. Interacts with MSH2 and TRIM28. Part of a complex composed of TRIM28, HDAC1, HDAC2 and EHMT2. Interacts with PCNA.

Its subcellular location is the nucleus. It localises to the chromosome. It catalyses the reaction ATP + H2O = ADP + phosphate + H(+). DNA helicase that possesses intrinsic ATP-dependent nucleosome-remodeling activity and is both required for DNA repair and heterochromatin organization. Promotes DNA end resection of double-strand breaks (DSBs) following DNA damage: probably acts by weakening histone DNA interactions in nucleosomes flanking DSBs. Required for the restoration of heterochromatin organization after replication. Acts at replication sites to facilitate the maintenance of heterochromatin by directing H3 and H4 histones deacetylation, H3 'Lys-9' trimethylation (H3K9me3) and restoration of silencing. In Rattus norvegicus (Rat), this protein is SWI/SNF-related matrix-associated actin-dependent regulator of chromatin subfamily A containing DEAD/H box 1 (Smarcad1).